The sequence spans 273 residues: Putative pyruvate, phosphate dikinase regulatory protein (273 aa).

151 to 158 (GVSRTSKT) lines the ADP pocket.

The protein belongs to the pyruvate, phosphate/water dikinase regulatory protein family. PDRP subfamily.

The catalysed reaction is N(tele)-phospho-L-histidyl/L-threonyl-[pyruvate, phosphate dikinase] + ADP = N(tele)-phospho-L-histidyl/O-phospho-L-threonyl-[pyruvate, phosphate dikinase] + AMP + H(+). It carries out the reaction N(tele)-phospho-L-histidyl/O-phospho-L-threonyl-[pyruvate, phosphate dikinase] + phosphate + H(+) = N(tele)-phospho-L-histidyl/L-threonyl-[pyruvate, phosphate dikinase] + diphosphate. Bifunctional serine/threonine kinase and phosphorylase involved in the regulation of the pyruvate, phosphate dikinase (PPDK) by catalyzing its phosphorylation/dephosphorylation. In Desulfitobacterium hafniense (strain DSM 10664 / DCB-2), this protein is Putative pyruvate, phosphate dikinase regulatory protein.